A 176-amino-acid polypeptide reads, in one-letter code: NAD(P)H-quinone oxidoreductase subunit 6, chloroplastic (176 aa).

Helical transmembrane passes span 10–30 (FLLVFLGSGLILGSLGVVLLT), 32–52 (PIFSAFSLGLVLVCISLFYIL), 63–83 (LLIYVGAINILIIFAVMFMNS), 92–112 (LWTVGDGITLIVCTSIFVSLV), and 152–172 (FFLPFELISIILLVALIGTIV).

It belongs to the complex I subunit 6 family. In terms of assembly, NDH is composed of at least 16 different subunits, 5 of which are encoded in the nucleus.

It is found in the plastid. The protein resides in the chloroplast thylakoid membrane. It catalyses the reaction a plastoquinone + NADH + (n+1) H(+)(in) = a plastoquinol + NAD(+) + n H(+)(out). It carries out the reaction a plastoquinone + NADPH + (n+1) H(+)(in) = a plastoquinol + NADP(+) + n H(+)(out). Its function is as follows. NDH shuttles electrons from NAD(P)H:plastoquinone, via FMN and iron-sulfur (Fe-S) centers, to quinones in the photosynthetic chain and possibly in a chloroplast respiratory chain. The immediate electron acceptor for the enzyme in this species is believed to be plastoquinone. Couples the redox reaction to proton translocation, and thus conserves the redox energy in a proton gradient. The chain is NAD(P)H-quinone oxidoreductase subunit 6, chloroplastic (ndhG) from Cicer arietinum (Chickpea).